The chain runs to 112 residues: Large ribosomal subunit protein uL22 (112 aa).

Belongs to the universal ribosomal protein uL22 family. As to quaternary structure, part of the 50S ribosomal subunit.

This protein binds specifically to 23S rRNA; its binding is stimulated by other ribosomal proteins, e.g. L4, L17, and L20. It is important during the early stages of 50S assembly. It makes multiple contacts with different domains of the 23S rRNA in the assembled 50S subunit and ribosome. Functionally, the globular domain of the protein is located near the polypeptide exit tunnel on the outside of the subunit, while an extended beta-hairpin is found that lines the wall of the exit tunnel in the center of the 70S ribosome. The chain is Large ribosomal subunit protein uL22 from Anaplasma marginale (strain Florida).